Reading from the N-terminus, the 147-residue chain is UPF0260 protein Ent638_2368 (147 aa).

Belongs to the UPF0260 family.

The protein is UPF0260 protein Ent638_2368 of Enterobacter sp. (strain 638).